We begin with the raw amino-acid sequence, 312 residues long: Lipoyl synthase (312 aa).

Positions 51, 56, 62, 77, 81, 84, and 290 each coordinate [4Fe-4S] cluster. One can recognise a Radical SAM core domain in the interval Trp63–Phe280.

The protein belongs to the radical SAM superfamily. Lipoyl synthase family. [4Fe-4S] cluster serves as cofactor.

Its subcellular location is the cytoplasm. The enzyme catalyses [[Fe-S] cluster scaffold protein carrying a second [4Fe-4S](2+) cluster] + N(6)-octanoyl-L-lysyl-[protein] + 2 oxidized [2Fe-2S]-[ferredoxin] + 2 S-adenosyl-L-methionine + 4 H(+) = [[Fe-S] cluster scaffold protein] + N(6)-[(R)-dihydrolipoyl]-L-lysyl-[protein] + 4 Fe(3+) + 2 hydrogen sulfide + 2 5'-deoxyadenosine + 2 L-methionine + 2 reduced [2Fe-2S]-[ferredoxin]. It functions in the pathway protein modification; protein lipoylation via endogenous pathway; protein N(6)-(lipoyl)lysine from octanoyl-[acyl-carrier-protein]: step 2/2. In terms of biological role, catalyzes the radical-mediated insertion of two sulfur atoms into the C-6 and C-8 positions of the octanoyl moiety bound to the lipoyl domains of lipoate-dependent enzymes, thereby converting the octanoylated domains into lipoylated derivatives. The sequence is that of Lipoyl synthase from Chlamydia caviae (strain ATCC VR-813 / DSM 19441 / 03DC25 / GPIC) (Chlamydophila caviae).